Consider the following 649-residue polypeptide: DNA mismatch repair protein MutL (649 aa).

This sequence belongs to the DNA mismatch repair MutL/HexB family.

Functionally, this protein is involved in the repair of mismatches in DNA. It is required for dam-dependent methyl-directed DNA mismatch repair. May act as a 'molecular matchmaker', a protein that promotes the formation of a stable complex between two or more DNA-binding proteins in an ATP-dependent manner without itself being part of a final effector complex. The sequence is that of DNA mismatch repair protein MutL from Streptococcus pneumoniae serotype 19F (strain G54).